The sequence spans 269 residues: Ribosomal RNA small subunit methyltransferase A (269 aa).

S-adenosyl-L-methionine-binding residues include N18, L20, G45, E66, D91, and N112.

Belongs to the class I-like SAM-binding methyltransferase superfamily. rRNA adenine N(6)-methyltransferase family. RsmA subfamily.

Its subcellular location is the cytoplasm. It carries out the reaction adenosine(1518)/adenosine(1519) in 16S rRNA + 4 S-adenosyl-L-methionine = N(6)-dimethyladenosine(1518)/N(6)-dimethyladenosine(1519) in 16S rRNA + 4 S-adenosyl-L-homocysteine + 4 H(+). In terms of biological role, specifically dimethylates two adjacent adenosines (A1518 and A1519) in the loop of a conserved hairpin near the 3'-end of 16S rRNA in the 30S particle. May play a critical role in biogenesis of 30S subunits. The protein is Ribosomal RNA small subunit methyltransferase A of Shewanella loihica (strain ATCC BAA-1088 / PV-4).